The primary structure comprises 175 residues: NADH-ubiquinone oxidoreductase chain 6 (175 aa).

Transmembrane regions (helical) follow at residues 1 to 21 (MMLY…VGFS), 25 to 45 (SPIY…GIVL), 47 to 67 (FGGS…MMVV), 88 to 108 (AVLG…YYVL), and 149 to 169 (YGTW…VVIM).

This sequence belongs to the complex I subunit 6 family. Core subunit of respiratory chain NADH dehydrogenase (Complex I) which is composed of 45 different subunits.

The protein resides in the mitochondrion inner membrane. The catalysed reaction is a ubiquinone + NADH + 5 H(+)(in) = a ubiquinol + NAD(+) + 4 H(+)(out). Core subunit of the mitochondrial membrane respiratory chain NADH dehydrogenase (Complex I) which catalyzes electron transfer from NADH through the respiratory chain, using ubiquinone as an electron acceptor. Essential for the catalytic activity and assembly of complex I. The sequence is that of NADH-ubiquinone oxidoreductase chain 6 (MT-ND6) from Bos mutus grunniens (Wild yak).